The following is a 337-amino-acid chain: ATP-dependent (S)-NAD(P)H-hydrate dehydratase (337 aa).

A Phosphoserine modification is found at S6. The YjeF C-terminal domain maps to 11–335 (IKLAQKRCIP…DRVGEVFAKL (325 aa)). (6S)-NADPHX is bound by residues G121 and 182–188 (NVVEFKR). ATP-binding positions include 218–222 (KGQSD) and 240–249 (GSNKRVGGQG). The tract at residues 224-246 (IFSPDSEKDMLTNSEEGSNKRVG) is disordered. D250 provides a ligand contact to (6S)-NADPHX.

It belongs to the NnrD/CARKD family. Requires Mg(2+) as cofactor.

The protein localises to the cytoplasm. It carries out the reaction (6S)-NADHX + ATP = ADP + phosphate + NADH + H(+). It catalyses the reaction (6S)-NADPHX + ATP = ADP + phosphate + NADPH + H(+). Its function is as follows. Catalyzes the dehydration of the S-form of NAD(P)HX at the expense of ATP, which is converted to ADP. Together with NAD(P)HX epimerase, which catalyzes the epimerization of the S- and R-forms, the enzyme allows the repair of both epimers of NAD(P)HX, a damaged form of NAD(P)H that is a result of enzymatic or heat-dependent hydration. The sequence is that of ATP-dependent (S)-NAD(P)H-hydrate dehydratase from Saccharomyces cerevisiae (strain ATCC 204508 / S288c) (Baker's yeast).